Reading from the N-terminus, the 161-residue chain is Endoribonuclease YbeY (161 aa).

Residues histidine 121, histidine 125, and histidine 131 each contribute to the Zn(2+) site.

This sequence belongs to the endoribonuclease YbeY family. The cofactor is Zn(2+).

The protein resides in the cytoplasm. In terms of biological role, single strand-specific metallo-endoribonuclease involved in late-stage 70S ribosome quality control and in maturation of the 3' terminus of the 16S rRNA. This chain is Endoribonuclease YbeY, found in Bordetella avium (strain 197N).